We begin with the raw amino-acid sequence, 359 residues long: E3 ubiquitin-protein ligase RNF146 (359 aa).

Residues 36–74 form an RING-type zinc finger; that stretch reads CAICLQTCVHPVSLPCKHVFCYLCVKGASWLGKRCALCR. Residues K84 and K94 each participate in a glycyl lysine isopeptide (Lys-Gly) (interchain with G-Cter in ubiquitin) cross-link. The region spanning 91–167 is the WWE domain; sequence EELKAASRGN…EHGRRRKIKR (77 aa). Y107, R110, and W114 together coordinate a glycoprotein. K130 participates in a covalent cross-link: Glycyl lysine isopeptide (Lys-Gly) (interchain with G-Cter in ubiquitin). The a glycoprotein site is built by Y144, Q153, R163, and K175. A Glycyl lysine isopeptide (Lys-Gly) (interchain with G-Cter in ubiquitin) cross-link involves residue K175. Positions 259 to 359 are disordered; sequence ERSHRGEGEE…PDGQCTVTEV (101 aa). The span at 284-298 shows a compositional bias: acidic residues; it reads SVEETESDASSDSED. 2 positions are modified to phosphoserine: S290 and S294. The segment covering 306–322 has biased composition (polar residues); the sequence is HSLTQQRLLVPNANQTV.

In terms of assembly, can form homooligomers. Interacts with PARsylated AXIN1, AXIN2, BLZF1, CASC3, H1-2, IPO7, LIG3, NCL, PARP1, XRCC1, XRCC5 and XRCC6. Interacts with DDB1, DHX15, IQGAP1, LRPPRC, PARP2, PRKDC, RUVBL2, TNKS1 and TNKS2. Binding often leads to interactor ubiquitination, in the presence of the appropriate E1 and E2 enzymes, and proteasomal degradation. Ubiquitinated; autoubiquitinated. Autoubiquitination is enhanced upon poly(ADP-ribose)-binding.

It localises to the cytoplasm. Its subcellular location is the cytosol. The protein resides in the nucleus. It catalyses the reaction S-ubiquitinyl-[E2 ubiquitin-conjugating enzyme]-L-cysteine + [acceptor protein]-L-lysine = [E2 ubiquitin-conjugating enzyme]-L-cysteine + N(6)-ubiquitinyl-[acceptor protein]-L-lysine.. It participates in protein modification; protein ubiquitination. Functionally, E3 ubiquitin-protein ligase that specifically binds poly-ADP-ribosylated (PARsylated) proteins and mediates their ubiquitination and subsequent degradation. May regulate many important biological processes, such as cell survival and DNA damage response. Acts as an activator of the Wnt signaling pathway by mediating the ubiquitination of PARsylated AXIN1 and AXIN2, 2 key components of the beta-catenin destruction complex. Acts in cooperation with tankyrase proteins (TNKS and TNKS2), which mediate PARsylation of target proteins AXIN1, AXIN2, BLZF1, CASC3, TNKS and TNKS2. Recognizes and binds tankyrase-dependent PARsylated proteins via its WWE domain and mediates their ubiquitination, leading to their degradation. Different ubiquitin linkage types have been observed: TNKS2 undergoes ubiquitination at 'Lys-48' and 'Lys-63', while AXIN1 is only ubiquitinated at 'Lys-48'. May regulate TNKS and TNKS2 subcellular location, preventing aggregation at a centrosomal location. Neuroprotective protein. Protects the brain against N-methyl-D-aspartate (NMDA) receptor-mediated glutamate excitotoxicity and ischemia, by interfering with PAR-induced cell death, called parthanatos. Prevents nuclear translocation of AIFM1 in a PAR-binding dependent manner. Does not affect PARP1 activation. Protects against cell death induced by DNA damaging agents, such as N-methyl-N-nitro-N-nitrosoguanidine (MNNG) and rescues cells from G1 arrest. Promotes cell survival after gamma-irradiation. Facilitates DNA repair. The chain is E3 ubiquitin-protein ligase RNF146 (RNF146) from Ailuropoda melanoleuca (Giant panda).